Consider the following 933-residue polypeptide: Thyroid peroxidase (933 aa).

A signal peptide spans 1-18 (MRALAVLSVTLVMACTEA). At 19–846 (FFPFISRGKE…TCVDSGRLPR (828 aa)) the chain is on the extracellular side. Asn-129 carries N-linked (GlcNAc...) asparagine glycosylation. A disulfide bond links Cys-142 and Cys-158. Asp-238 is a heme b binding site. Catalysis depends on His-239, which acts as the Proton acceptor. Position 240 (Asp-240) interacts with Ca(2+). Intrachain disulfides connect Cys-259–Cys-269 and Cys-263–Cys-286. N-linked (GlcNAc...) asparagine glycosylation is present at Asn-307. Residues Thr-321, Phe-323, Asp-325, and Ser-327 each coordinate Ca(2+). Residue Asn-342 is glycosylated (N-linked (GlcNAc...) asparagine). Heme b-binding residues include Glu-399 and His-494. The N-linked (GlcNAc...) asparagine glycan is linked to Asn-569. Cystine bridges form between Cys-598-Cys-655 and Cys-696-Cys-721. The region spanning 740–795 (DKCGFPESVENGDFVHCEESGRRVLVYSCRHGYELQGREQLTCTQEGWDFQPPLCK) is the Sushi domain. Residues 796–839 (DVNECADGAHPPCHASARCRNTKGGFQCLCADPYELGDDGRTCV) form the EGF-like; calcium-binding domain. Disulfide bonds link Cys-800–Cys-814, Cys-808–Cys-823, and Cys-825–Cys-838. A helical transmembrane segment spans residues 847 to 871 (VTWISMSLAALLIGGFAGLTSTVIC). At 872–933 (RWTRTGTKST…RDTHRLPRAL (62 aa)) the chain is on the cytoplasmic side. A disordered region spans residues 881–933 (TLPISETGGGTPELRCGKHQAVGTSPQRAAAQDSEQESAGMEGRDTHRLPRAL). The span at 922-933 (EGRDTHRLPRAL) shows a compositional bias: basic and acidic residues.

The protein belongs to the peroxidase family. XPO subfamily. In terms of assembly, interacts with DUOX1, DUOX2 and CYBA. Ca(2+) is required as a cofactor. Requires heme b as cofactor. Post-translationally, glycosylated. Heme is covalently bound through a H(2)O(2)-dependent autocatalytic process. Heme insertion is important for the delivery of protein at the cell surface. In terms of processing, cleaved in its N-terminal part.

It is found in the membrane. Its subcellular location is the cell surface. The catalysed reaction is 2 iodide + H2O2 + 2 H(+) = diiodine + 2 H2O. It catalyses the reaction [thyroglobulin]-L-tyrosine + iodide + H2O2 + H(+) = [thyroglobulin]-3-iodo-L-tyrosine + 2 H2O. The enzyme catalyses [thyroglobulin]-3-iodo-L-tyrosine + iodide + H2O2 + H(+) = [thyroglobulin]-3,5-diiodo-L-tyrosine + 2 H2O. It carries out the reaction 2 [thyroglobulin]-3,5-diiodo-L-tyrosine + H2O2 = [thyroglobulin]-L-thyroxine + [thyroglobulin]-dehydroalanine + 2 H2O. The catalysed reaction is [thyroglobulin]-3-iodo-L-tyrosine + [thyroglobulin]-3,5-diiodo-L-tyrosine + H2O2 = [thyroglobulin]-3,3',5-triiodo-L-thyronine + [thyroglobulin]-dehydroalanine + 2 H2O. It functions in the pathway hormone biosynthesis; thyroid hormone biosynthesis. Its function is as follows. Iodination and coupling of the hormonogenic tyrosines in thyroglobulin to yield the thyroid hormones T(3) and T(4). The chain is Thyroid peroxidase from Homo sapiens (Human).